The sequence spans 313 residues: Putative HTH-type transcriptional regulatory protein Msm_0453 (313 aa).

Residues 131–189 enclose the HTH cro/C1-type domain; that stretch reads IKQYREEYSLSLKDLADLAHVSRATMYKYENEIVRANTETAMILEEILNTKVTLDIDLL. The segment at residues 142-161 is a DNA-binding region (H-T-H motif); that stretch reads LKDLADLAHVSRATMYKYEN.

The polypeptide is Putative HTH-type transcriptional regulatory protein Msm_0453 (Methanobrevibacter smithii (strain ATCC 35061 / DSM 861 / OCM 144 / PS)).